Reading from the N-terminus, the 1154-residue chain is Paired amphipathic helix protein pst3 (1154 aa).

Disordered regions lie at residues 1–71 and 91–110; these read MDVM…RSVT and SGKD…SSSN. The span at 9-27 shows a compositional bias: basic and acidic residues; that stretch reads DSERDNPGDKVETQSDKNH. 2 stretches are compositionally biased toward polar residues: residues 32–45 and 100–110; these read SPSQ…TSLH and QNAEGLSSSSN. Positions 111-181 constitute a PAH 1 domain; the sequence is RPLDVNDALS…EGFNTFLPSG (71 aa). 2 disordered regions span residues 199-249 and 321-376; these read GTPM…STEN and DNVD…KTSR. Residues 228–241 are compositionally biased toward low complexity; sequence STSPTDSQPQPSAP. In terms of domain architecture, PAH 2 spans 252–322; the sequence is PRVDFNYAIA…EEFKLFLPDN (71 aa). 2 stretches are compositionally biased toward polar residues: residues 323-337 and 365-376; these read VDST…QKSP and AQISRSISKTSR. Residues 403–472 enclose the PAH 3 domain; the sequence is SPYAATQEEL…LWFSEFIRWS (70 aa). Residues 797–824 are disordered; it reads NSNNTNVSFQTDETQTEDETMSDIHPDD.

The protein localises to the nucleus. In Schizosaccharomyces pombe (strain 972 / ATCC 24843) (Fission yeast), this protein is Paired amphipathic helix protein pst3 (pst3).